Consider the following 670-residue polypeptide: DNA ligase (670 aa).

NAD(+) contacts are provided by residues aspartate 34 to aspartate 38, serine 84 to leucine 85, glutamate 116 to valine 119, arginine 139, glutamate 174, tyrosine 226, lysine 291, and lysine 315. Catalysis depends on lysine 118, which acts as the N6-AMP-lysine intermediate. Zn(2+) is bound by residues cysteine 409, cysteine 412, cysteine 425, and cysteine 430. Positions glutamate 586–alanine 670 constitute a BRCT domain.

It belongs to the NAD-dependent DNA ligase family. LigA subfamily. Mg(2+) serves as cofactor.

It catalyses the reaction NAD(+) + (deoxyribonucleotide)n-3'-hydroxyl + 5'-phospho-(deoxyribonucleotide)m = (deoxyribonucleotide)n+m + AMP + beta-nicotinamide D-nucleotide.. Its function is as follows. DNA ligase that catalyzes the formation of phosphodiester linkages between 5'-phosphoryl and 3'-hydroxyl groups in double-stranded DNA using NAD as a coenzyme and as the energy source for the reaction. It is essential for DNA replication and repair of damaged DNA. The protein is DNA ligase of Thermus filiformis.